The primary structure comprises 370 residues: Alanine racemase (370 aa).

Lys39 serves as the catalytic Proton acceptor; specific for D-alanine. Lys39 is subject to N6-(pyridoxal phosphate)lysine. Arg137 serves as a coordination point for substrate. Tyr258 serves as the catalytic Proton acceptor; specific for L-alanine. Met306 lines the substrate pocket.

This sequence belongs to the alanine racemase family. Pyridoxal 5'-phosphate is required as a cofactor.

It carries out the reaction L-alanine = D-alanine. The protein operates within amino-acid biosynthesis; D-alanine biosynthesis; D-alanine from L-alanine: step 1/1. In terms of biological role, catalyzes the interconversion of L-alanine and D-alanine. May also act on other amino acids. This Methylobacterium nodulans (strain LMG 21967 / CNCM I-2342 / ORS 2060) protein is Alanine racemase (alr).